The sequence spans 759 residues: Xaa-Pro dipeptidyl-peptidase (759 aa).

Catalysis depends on charge relay system residues Ser-347, Asp-467, and His-497.

It belongs to the peptidase S15 family. As to quaternary structure, homodimer.

It localises to the cytoplasm. It carries out the reaction Hydrolyzes Xaa-Pro-|- bonds to release unblocked, N-terminal dipeptides from substrates including Ala-Pro-|-p-nitroanilide and (sequentially) Tyr-Pro-|-Phe-Pro-|-Gly-Pro-|-Ile.. Its function is as follows. Removes N-terminal dipeptides sequentially from polypeptides having unsubstituted N-termini provided that the penultimate residue is proline. The sequence is that of Xaa-Pro dipeptidyl-peptidase from Streptococcus gordonii (strain Challis / ATCC 35105 / BCRC 15272 / CH1 / DL1 / V288).